A 674-amino-acid chain; its full sequence is Anosmin-1 (674 aa).

Residues 1 to 21 (MVRRAPGASLALLLWVTAVSC) form the signal peptide. Intrachain disulfides connect Cys-47–Cys-71, Cys-80–Cys-99, Cys-84–Cys-95, and Cys-110–Cys-114. An N-linked (GlcNAc...) asparagine glycan is attached at Asn-65. The WAP domain maps to 121–170 (LSVKQGDCPAPEKASGFAAACFESCEADSECSGVKKCCSNGCGHTCQVPK). 4 consecutive Fibronectin type-III domains span residues 180 to 281 (PRKE…SKDP), 286 to 392 (APSN…TTQD), 418 to 515 (RRKP…FFVT), and 545 to 652 (KPEN…DLPP). N-linked (GlcNAc...) asparagine glycans are attached at residues Asn-203 and Asn-294. Over residues 388–402 (STTQDNRNNNEQTSV) the composition is skewed to polar residues. The tract at residues 388 to 413 (STTQDNRNNNEQTSVEKPPKGVVDPY) is disordered. 3 N-linked (GlcNAc...) asparagine glycosylation sites follow: Asn-465, Asn-548, and Asn-559. A disordered region spans residues 655–674 (PHRPHLKHHPHRYKPPPEKY). The span at 656-668 (HRPHLKHHPHRYK) shows a compositional bias: basic residues.

It localises to the cell surface. May be an adhesion-like molecule with anti-protease activity. This Coturnix japonica (Japanese quail) protein is Anosmin-1.